A 51-amino-acid polypeptide reads, in one-letter code: Cytoplasmic FMR1-interacting protein 1 (51 aa).

The protein belongs to the CYFIP family. As to quaternary structure, component of the WAVE1 complex composed of ABI2, CYFIP1 or CYFIP2, BRK1, NCKAP1 and WASF1/WAVE1. Within the complex, a heterodimer containing NCKAP1 and CYFIP1 interacts with a heterotrimer formed by WAVE1, ABI2 and BRK1. Component of the CYFIP1-EIF4E-FMR1 complex which is composed of CYFIP, EIF4E and FMR1. Interacts with FMR1 but does not bind to related proteins FXR1 or FXR2. Interaction with EIF4E stimulates FMR1 binding. Component of the WAVE2 complex composed of ABI1, CYFIP1/SRA1, NCKAP1/NAP1 (NCKAP1l/HEM1 in hematopoietic cells) and WASF2/WAVE2. Interacts with the active GTP-bound form of RAC1. Interacts through its C-terminus with the C-terminus of DPYSL2/CRMP2 which is necessary for DPYSL2-induced axon outgrowth. Interacts with NYAP1, NYAP2 and MYO16. Interacts with TMEM108 (via N-terminus); the interaction associates TMEM108 with the WAVE1 complex.

It localises to the cytoplasm. It is found in the perinuclear region. Its subcellular location is the cell projection. The protein resides in the lamellipodium. The protein localises to the ruffle. It localises to the synapse. It is found in the synaptosome. In terms of biological role, component of the CYFIP1-EIF4E-FMR1 complex which binds to the mRNA cap and mediates translational repression. In the CYFIP1-EIF4E-FMR1 complex this subunit is an adapter between EIF4E and FMR1. Promotes the translation repression activity of FMR1 in brain probably by mediating its association with EIF4E and mRNA. Regulates formation of membrane ruffles and lamellipodia. Plays a role in axon outgrowth. Binds to F-actin but not to RNA. Part of the WAVE complex that regulates actin filament reorganization via its interaction with the Arp2/3 complex. Actin remodeling activity is regulated by RAC1. Regulator of epithelial morphogenesis. As component of the WAVE1 complex, required for BDNF-NTRK2 endocytic trafficking and signaling from early endosomes. The polypeptide is Cytoplasmic FMR1-interacting protein 1 (Bos taurus (Bovine)).